Here is a 2271-residue protein sequence, read N- to C-terminus: Protein Ycf2 (2271 aa).

1628–1635 (GSIGTGRS) is an ATP binding site.

It belongs to the Ycf2 family.

The protein localises to the plastid. It localises to the chloroplast stroma. Probable ATPase of unknown function. Its presence in a non-photosynthetic plant (Epifagus virginiana) and experiments in tobacco indicate that it has an essential function which is probably not related to photosynthesis. This chain is Protein Ycf2, found in Illicium oligandrum (Star anise).